We begin with the raw amino-acid sequence, 146 residues long: Large ribosomal subunit protein uL15 (146 aa).

The segment covering 1-13 has biased composition (basic and acidic residues); that stretch reads MKLHELKPAEGSR. The tract at residues 1 to 57 is disordered; the sequence is MKLHELKPAEGSRKVRNRVGRGTSSGNGKTSGRGQKGQKARSGVGLRPGFEGGQTPL. Residues 23-35 are compositionally biased toward gly residues; sequence TSSGNGKTSGRGQ.

This sequence belongs to the universal ribosomal protein uL15 family. In terms of assembly, part of the 50S ribosomal subunit.

In terms of biological role, binds to the 23S rRNA. In Streptococcus thermophilus (strain ATCC BAA-491 / LMD-9), this protein is Large ribosomal subunit protein uL15.